Reading from the N-terminus, the 393-residue chain is Sialyltransferase-like protein 1 (393 aa).

Over 1 to 8 (MKRPLRRP) the chain is Cytoplasmic. The helical; Signal-anchor for type II membrane protein transmembrane segment at 9–27 (FAVLLFVVLCAAASFPSVL) threads the bilayer. The Lumenal portion of the chain corresponds to 28-393 (RRSVGPAPVL…IAVPPVVFYH (366 aa)). 3 N-linked (GlcNAc...) asparagine glycosylation sites follow: asparagine 49, asparagine 212, and asparagine 258.

Belongs to the glycosyltransferase 29 family.

Its subcellular location is the golgi apparatus membrane. In terms of biological role, possesses sialyltransferase-like activity in vitro. Transfers sialic acid to the oligosaccharide Gal-beta-1,3-GalNAc and to glycoproteins such as asialofetuin, alpha-1-acid glycoprotein (NeuAc-alpha-2,3-Gal-beta-1,3-GalNAc-) and andasialo-alpha-1-acid glycoprotein. The transferred sialic acid is linked to galactose of Gal-beta-1,3-GalNAc through alpha-2,6-linkage. The protein is Sialyltransferase-like protein 1 of Oryza sativa subsp. indica (Rice).